A 184-amino-acid polypeptide reads, in one-letter code: Major fimbrial subunit (184 aa).

The N-terminal stretch at 1-22 (MKLSKIALAAALVFGINSVATA) is a signal peptide. An intrachain disulfide couples C49 to C88.

Belongs to the fimbrial protein family.

The protein resides in the fimbrium. Its function is as follows. Major structural component of PMF fimbriae. The chain is Major fimbrial subunit (pmfA) from Proteus mirabilis (strain HI4320).